We begin with the raw amino-acid sequence, 162 residues long: Transcription elongation factor GreA (162 aa).

A coiled-coil region spans residues 44-72; it reads ENAEYHAAKEKQSHIERRIAELSDILSRA.

This sequence belongs to the GreA/GreB family.

Necessary for efficient RNA polymerase transcription elongation past template-encoded arresting sites. The arresting sites in DNA have the property of trapping a certain fraction of elongating RNA polymerases that pass through, resulting in locked ternary complexes. Cleavage of the nascent transcript by cleavage factors such as GreA or GreB allows the resumption of elongation from the new 3'terminus. GreA releases sequences of 2 to 3 nucleotides. This chain is Transcription elongation factor GreA, found in Nautilia profundicola (strain ATCC BAA-1463 / DSM 18972 / AmH).